The sequence spans 236 residues: Mammalian ependymin-related protein 1 (236 aa).

A signal peptide spans 1 to 35 (MPRRAPLRVARGSLDAWLLGGLWVCALGCLCGVGM). 3 disulfide bridges follow: C54-C184, C100-C234, and C125-C222. N-linked (GlcNAc...) asparagine glycosylation is found at N142 and N194.

The protein belongs to the ependymin family. Homodimer. N-glycosylated; the glycan contains mannose-6-phosphate moieties.

It is found in the lysosome lumen. The protein resides in the secreted. Its function is as follows. Binds anionic lipids and gangliosides at acidic pH. This is Mammalian ependymin-related protein 1 (EPDR1) from Bos taurus (Bovine).